The following is a 192-amino-acid chain: Phosphoheptose isomerase (192 aa).

The SIS domain maps to 37–192 (LADSFKQEGK…IQLVEKEMAK (156 aa)). A substrate-binding site is contributed by 52-54 (NGG). The Zn(2+) site is built by H61 and E65. Residues E65, 93 to 94 (ND), 119 to 121 (STS), S124, and Q172 each bind substrate. Zn(2+) is bound by residues Q172 and H180.

This sequence belongs to the SIS family. GmhA subfamily. In terms of assembly, homotetramer. Requires Zn(2+) as cofactor.

Its subcellular location is the cytoplasm. The enzyme catalyses 2 D-sedoheptulose 7-phosphate = D-glycero-alpha-D-manno-heptose 7-phosphate + D-glycero-beta-D-manno-heptose 7-phosphate. It participates in carbohydrate biosynthesis; D-glycero-D-manno-heptose 7-phosphate biosynthesis; D-glycero-alpha-D-manno-heptose 7-phosphate and D-glycero-beta-D-manno-heptose 7-phosphate from sedoheptulose 7-phosphate: step 1/1. In terms of biological role, catalyzes the isomerization of sedoheptulose 7-phosphate in D-glycero-D-manno-heptose 7-phosphate. This Aeromonas salmonicida (strain A449) protein is Phosphoheptose isomerase.